A 350-amino-acid chain; its full sequence is Inositol 2-dehydrogenase/D-chiro-inositol 3-dehydrogenase (350 aa).

Belongs to the Gfo/Idh/MocA family. As to quaternary structure, homotetramer.

It carries out the reaction myo-inositol + NAD(+) = scyllo-inosose + NADH + H(+). It catalyses the reaction 1D-chiro-inositol + NAD(+) = scyllo-inosine + NADH + H(+). It functions in the pathway polyol metabolism; myo-inositol degradation into acetyl-CoA; acetyl-CoA from myo-inositol: step 1/7. Its function is as follows. Involved in the oxidation of myo-inositol (MI) and D-chiro-inositol (DCI) to 2-keto-myo-inositol (2KMI or 2-inosose) and 1-keto-D-chiro-inositol (1KDCI), respectively. This Lactiplantibacillus plantarum (strain ATCC BAA-793 / NCIMB 8826 / WCFS1) (Lactobacillus plantarum) protein is Inositol 2-dehydrogenase/D-chiro-inositol 3-dehydrogenase.